The following is a 2907-amino-acid chain: Fibrillin-2 (2907 aa).

The signal sequence occupies residues 1-28 (MGRRRRLCLQPYFVWLGCVALWAQGTDG). Residues 26–58 (TDGQPQPPPPKTLRPQPPPQQVRPAVAGSEGGF) form a disordered region. Residues 29–77 (QPQPPPPKTLRPQPPPQQVRPAVAGSEGGFMGPEYRDEGAVAASRVRRR) constitute a propeptide that is removed on maturation. Positions 30–46 (PQPPPPKTLRPQPPPQQ) are enriched in pro residues. EGF-like domains are found at residues 111–142 (IVPI…PTCG), 145–176 (SIQQ…TYCG), and 176–208 (GQPV…PQCE). Cystine bridges form between Cys-115–Cys-124, Cys-119–Cys-130, Cys-132–Cys-141, Cys-149–Cys-159, Cys-153–Cys-164, Cys-166–Cys-175, Cys-180–Cys-190, Cys-184–Cys-196, and Cys-198–Cys-207. Residues 149 to 359 (CSVRCMNGGT…VTSTDGSRCI (211 aa)) form an interaction with MFAP4 region. The region spanning 214–266 (GPCFTQVNNQMCQGQLTGIVCTKTLCCATIGRAWGHPCEMCPAQPQPCRRGFI) is the TB 1 domain. Residues 276–317 (DVDECQAIPGLCQGGNCINTVGSFECRCPAGHKQSETTQKCE) form the EGF-like 4; calcium-binding domain. 6 disulfides stabilise this stretch: Cys-280-Cys-292, Cys-287-Cys-301, Cys-303-Cys-316, Cys-322-Cys-334, Cys-329-Cys-343, and Cys-345-Cys-358. Residue Ser-298 is glycosylated (O-linked (Glc) serine). In terms of domain architecture, EGF-like 5; calcium-binding spans 318-359 (DIDECSVIPGVCETGDCSNTVGSYFCLCPRGFVTSTDGSRCI). A glycan (O-linked (Glc) serine) is linked at Ser-340. A TB 2 domain is found at 364–417 (GTCFSGLVNGRCAQELPGRMAKAQCCCEPGRCWSIGTIPEACPVRGSEEYRRLC). N-linked (GlcNAc...) asparagine glycosylation is present at Asn-485. The EGF-like 6 domain occupies 487-527 (TIDICKHHANLCLNGRCIPTVSSYRCECNMGYKQDANGDCI). Intrachain disulfides connect Cys-491-Cys-503, Cys-498-Cys-512, Cys-514-Cys-526, Cys-532-Cys-542, Cys-537-Cys-551, Cys-553-Cys-566, Cys-572-Cys-584, Cys-579-Cys-593, Cys-595-Cys-608, Cys-614-Cys-625, Cys-620-Cys-634, Cys-636-Cys-649, Cys-655-Cys-666, Cys-661-Cys-675, and Cys-677-Cys-690. Ser-509 is a glycosylation site (O-linked (Glc) serine). Residues 528–567 (DVDECTSNPCSNGDCVNTPGSYYCKCHAGFQRTPTKQACI) form the EGF-like 7; calcium-binding domain. Residue Ser-548 is glycosylated (O-linked (Glc) serine). Positions 568-609 (DIDECIQNGVLCKNGRCVNTDGSFQCICNAGFELTTDGKNCV) constitute an EGF-like 8; calcium-binding domain. The O-linked (Glc) serine glycan is linked to Ser-590. Positions 610–650 (DHDECTTTNMCLNGMCINEDGSFKCVCKPGFILAPNGRYCT) constitute an EGF-like 9; calcium-binding domain. Ser-631 carries O-linked (Glc) serine glycosylation. An EGF-like 10; calcium-binding domain is found at 651-691 (DVDECQTPGICMNGHCINNEGSFRCDCPPGLAVGVDGRVCV). A glycan (O-linked (Glc) serine) is linked at Ser-672. Residues 697–749 (STCYGEIKKGVCVRPFPGAVTKSECCCANPDYGFGEPCQPCPAKNSAEFHGLC) enclose the TB 3 domain. The region spanning 761–802 (DINECALDPDICANGICENLRGSYRCNCNSGYEPDASGRNCI) is the EGF-like 11; calcium-binding domain. 9 disulfide bridges follow: Cys-765–Cys-777, Cys-772–Cys-786, Cys-788–Cys-801, Cys-807–Cys-819, Cys-814–Cys-828, Cys-830–Cys-843, Cys-849–Cys-859, Cys-854–Cys-868, and Cys-870–Cys-883. The EGF-like 12; calcium-binding domain occupies 803–844 (DIDECLVNRLLCDNGLCRNTPGSYSCTCPPGYVFRTETETCE). Ser-825 carries an O-linked (Glc) serine glycan. Residues 845–883 (DVNECESNPCVNGACRNNLGSFHCECSPGSKLSSTGLIC) form the EGF-like 13; calcium-binding domain. Ser-865 is a glycosylation site (O-linked (Glc) serine). Residues 889–940 (GTCWLNIQDNRCEVNINGATLKSECCATLGAAWGSPCERCELDAACPRGFAR) form the TB 4 domain. Residues 948 to 989 (DVNECEVFPGVCPNGRCVNSKGSFHCECPEGLTLDGTGRVCL) form the EGF-like 14; calcium-binding domain. 3 cysteine pairs are disulfide-bonded: Cys-952–Cys-964, Cys-959–Cys-973, and Cys-975–Cys-988. A glycan (O-linked (Glc) serine) is linked at Ser-970. The region spanning 994–1045 (EHCFLKWDEDECIHPVPGKFRMDACCCAVGAAWGTECEECPKPGTKEYETLC) is the TB 5 domain. Residues 1066–1107 (DINECKAFPGMCTYGKCRNTIGSFKCRCNNGFALDMEERNCT) form the EGF-like 15; calcium-binding domain. 36 disulfides stabilise this stretch: Cys-1070-Cys-1082, Cys-1077-Cys-1091, Cys-1093-Cys-1106, Cys-1112-Cys-1124, Cys-1119-Cys-1133, Cys-1135-Cys-1149, Cys-1155-Cys-1167, Cys-1162-Cys-1176, Cys-1178-Cys-1191, Cys-1197-Cys-1209, Cys-1204-Cys-1218, Cys-1220-Cys-1233, Cys-1239-Cys-1250, Cys-1246-Cys-1259, Cys-1261-Cys-1274, Cys-1280-Cys-1292, Cys-1287-Cys-1301, Cys-1303-Cys-1316, Cys-1322-Cys-1334, Cys-1329-Cys-1343, Cys-1345-Cys-1358, Cys-1364-Cys-1377, Cys-1371-Cys-1386, Cys-1388-Cys-1399, Cys-1405-Cys-1418, Cys-1412-Cys-1427, Cys-1429-Cys-1440, Cys-1446-Cys-1458, Cys-1453-Cys-1467, Cys-1469-Cys-1482, Cys-1488-Cys-1499, Cys-1494-Cys-1508, Cys-1510-Cys-1523, Cys-1529-Cys-1540, Cys-1535-Cys-1549, and Cys-1551-Cys-1564. An O-linked (Glc) serine glycan is attached at Ser-1088. Asn-1105 is a glycosylation site (N-linked (GlcNAc...) asparagine). Residues 1108–1150 (DIDECRISPDLCGSGICVNTPGSFECECFEGYESGFMMMKNCM) form the EGF-like 16; calcium-binding domain. Residues 1151–1192 (DIDECERNPLLCRGGTCVNTEGSFQCDCPLGHELSPSREDCV) form the EGF-like 17; calcium-binding domain. Ser-1173 carries an O-linked (Glc) serine glycan. The EGF-like 18; calcium-binding domain occupies 1193–1234 (DINECSLSDNLCRNGKCVNMIGTYQCSCNPGYQATPDRQGCT). The O-linked (Glc) threonine glycan is linked to Thr-1215. Positions 1235-1275 (DIDECMIMNGGCDTQCTNSEGSYECSCSEGYALMPDGRSCA) constitute an EGF-like 19; calcium-binding domain. An O-linked (Glc) serine glycan is attached at Ser-1256. An EGF-like 20; calcium-binding domain is found at 1276–1317 (DIDECENNPDICDGGQCTNIPGEYRCLCYDGFMASMDMKTCI). The 42-residue stretch at 1318-1359 (DVNECDLNPNICMFGECENTKGSFICHCQLGYSVKKGTTGCT) folds into the EGF-like 21; calcium-binding domain. An O-linked (Glc) serine glycan is attached at Ser-1340. In terms of domain architecture, EGF-like 22; calcium-binding spans 1360-1400 (DVDECEIGAHNCDMHASCLNVPGSFKCSCREGWVGNGIKCI). A glycan (O-linked (Glc) serine) is linked at Ser-1383. Residues 1401–1441 (DLDECANGTHQCSINAQCVNTPGSYRCACSEGFTGDGFTCS) enclose the EGF-like 23; calcium-binding domain. Asn-1407 carries N-linked (GlcNAc...) asparagine glycosylation. Residues 1442–1483 (DVDECAENTNLCENGQCLNVPGAYRCECEMGFTPASDSRSCQ) enclose the EGF-like 24; calcium-binding domain. The region spanning 1484 to 1524 (DIDECSFQNICVFGTCNNLPGMFHCICDDGYELDRTGGNCT) is the EGF-like 25; calcium-binding domain. A glycan (N-linked (GlcNAc...) asparagine) is linked at Asn-1522. One can recognise an EGF-like 26; calcium-binding domain in the interval 1525-1565 (DIDECADPINCVNGLCVNTPGRYECNCPPDFQLNPTGVGCV). The TB 6 domain occupies 1570-1626 (GNCYLKFGPRGDGSLSCNTEVGVGVSRSSCCCSLGKAWGNPCETCPPVNSTEYYTLC). An N-linked (GlcNAc...) asparagine glycan is attached at Asn-1618. An EGF-like 27; calcium-binding domain is found at 1643-1684 (DIDECQELPGLCQGGNCINTFGSFQCECPQGYYLSEETRICE). Disulfide bonds link Cys-1647–Cys-1659, Cys-1654–Cys-1668, Cys-1670–Cys-1683, Cys-1689–Cys-1701, Cys-1696–Cys-1710, and Cys-1712–Cys-1725. A glycan (O-linked (Glc) serine) is linked at Ser-1665. The region spanning 1685 to 1726 (DIDECFAHPGVCGPGTCYNTLGNYTCICPPEYMQVNGGHNCM) is the EGF-like 28; calcium-binding domain. Asn-1707 carries an N-linked (GlcNAc...) asparagine glycan. Residues 1728–2164 (MRKSFCYRSY…VPSLHDTRED (437 aa)) form an interaction with MFAP4 region. In terms of domain architecture, TB 7 spans 1731–1784 (SFCYRSYNGTTCENELPFNVTKRMCCCTYNVGKAWNKPCEPCPTPGTADFKTIC). N-linked (GlcNAc...) asparagine glycosylation is found at Asn-1738 and Asn-1749. In terms of domain architecture, EGF-like 29; calcium-binding spans 1801–1842 (DIDECKEIPGICANGVCINQIGSFRCECPTGFSYNDLLLVCE). 21 disulfides stabilise this stretch: Cys-1805-Cys-1817, Cys-1812-Cys-1826, Cys-1828-Cys-1841, Cys-1847-Cys-1860, Cys-1854-Cys-1869, Cys-1871-Cys-1883, Cys-1889-Cys-1901, Cys-1896-Cys-1910, Cys-1912-Cys-1925, Cys-1931-Cys-1941, Cys-1936-Cys-1950, Cys-1952-Cys-1964, Cys-1970-Cys-1983, Cys-1978-Cys-1992, Cys-1994-Cys-2007, Cys-2013-Cys-2025, Cys-2020-Cys-2034, Cys-2036-Cys-2047, Cys-2053-Cys-2065, Cys-2060-Cys-2074, and Cys-2076-Cys-2089. In terms of domain architecture, EGF-like 30; calcium-binding spans 1843–1884 (DIDECSNGDNLCQRNADCINSPGSYRCECAAGFKLSPNGACV). Ser-1866 is a glycosylation site (O-linked (Glc) serine). The EGF-like 31; calcium-binding domain maps to 1885–1926 (DRNECLEIPNVCSHGLCVDLQGSYQCICNNGFKASQDQTMCM). Residues 1927-1965 (DVDECERHPCGNGTCKNTVGSYNCLCYPGFELTHNNDCL) form the EGF-like 32; calcium-binding domain. Residue Asn-1938 is glycosylated (N-linked (GlcNAc...) asparagine). An O-linked (Glc) serine glycan is attached at Ser-1947. The 43-residue stretch at 1966–2008 (DIDECSSFFGQVCRNGRCFNEIGSFKCLCNEGYELTPDGKNCI) folds into the EGF-like 33; calcium-binding domain. Residue Ser-1989 is glycosylated (O-linked (Glc) serine). The EGF-like 34; calcium-binding domain occupies 2009–2048 (DTNECVALPGSCSPGTCQNLEGSFRCICPPGYEVRSENCI). The EGF-like 35; calcium-binding domain maps to 2049-2090 (DINECDEDPNICLFGSCTNTPGGFQCICPPGFVLSDNGRRCF). The TB 8 domain maps to 2095–2148 (SFCFTNFENGKCSVPKAFNTTKAKCCCSKMPGEGWGDPCELCPKDDEVAFQDLC). An N-linked (GlcNAc...) asparagine glycan is attached at Asn-2113. An EGF-like 36; calcium-binding domain is found at 2164–2205 (DVNECLESPGICSNGQCINTDGSFRCECPMGYNLDYTGVRCV). 15 disulfide bridges follow: Cys-2168–Cys-2180, Cys-2175–Cys-2189, Cys-2191–Cys-2204, Cys-2210–Cys-2221, Cys-2216–Cys-2230, Cys-2232–Cys-2244, Cys-2250–Cys-2261, Cys-2257–Cys-2270, Cys-2272–Cys-2285, Cys-2291–Cys-2305, Cys-2298–Cys-2314, Cys-2316–Cys-2329, Cys-2335–Cys-2347, Cys-2342–Cys-2356, and Cys-2358–Cys-2371. A glycan (O-linked (Glc) serine) is linked at Ser-2186. Residues 2206-2245 (DTDECSIGNPCGNGTCTNVIGSFECTCNEGFEPGPMMNCE) form the EGF-like 37; calcium-binding domain. Asn-2218 carries an N-linked (GlcNAc...) asparagine glycan. The EGF-like 38; calcium-binding domain occupies 2246–2286 (DINECAQNPLLCAFRCMNTFGSYECTCPVGYALREDQKMCK). O-linked (Glc) serine glycosylation is present at Ser-2267. One can recognise an EGF-like 39; calcium-binding domain in the interval 2287–2330 (DLDECAEGLHDCESRGMMCKNLIGTFMCICPPGMARRPDGEGCV). The EGF-like 40; calcium-binding domain maps to 2331–2372 (DENECRTKPGICENGRCVNIIGSYRCECNEGFQSSSSGTECL). O-linked (Glc) serine glycosylation occurs at Ser-2353. The TB 9 domain maps to 2377-2430 (GLCFAEVLQTMCQMASSSRNLVTKSECCCDGGRGWGHQCELCPLPGTAQYKKIC). The region spanning 2442–2483 (DIDECKVMPSLCTNGQCVNTMGSFRCFCKVGYTTDISGTACV) is the EGF-like 41; calcium-binding domain. Disulfide bonds link Cys-2446–Cys-2458, Cys-2453–Cys-2467, Cys-2469–Cys-2482, Cys-2488–Cys-2499, Cys-2495–Cys-2508, Cys-2510–Cys-2523, Cys-2529–Cys-2540, Cys-2536–Cys-2549, Cys-2551–Cys-2562, Cys-2568–Cys-2581, Cys-2575–Cys-2590, Cys-2592–Cys-2605, Cys-2611–Cys-2621, Cys-2617–Cys-2630, Cys-2632–Cys-2645, Cys-2651–Cys-2662, Cys-2657–Cys-2671, Cys-2673–Cys-2686, Cys-2692–Cys-2703, Cys-2699–Cys-2712, and Cys-2714–Cys-2726. A glycan (O-linked (Glc) serine) is linked at Ser-2464. Residues 2484–2524 (DLDECSQSPKPCNFICKNTKGSYQCSCPRGYVLQEDGKTCK) enclose the EGF-like 42; calcium-binding domain. O-linked (Glc) serine glycosylation is present at Ser-2505. The EGF-like 43; calcium-binding domain maps to 2525–2563 (DLDECQTKQHNCQFLCVNTLGGFTCKCPPGFTQHHTACI). The EGF-like 44; calcium-binding domain occupies 2564-2606 (DNNECGSQPSLCGAKGICQNTPGSFSCECQRGFSLDASGLNCE). O-linked (Glc) serine glycosylation occurs at Ser-2587. The 40-residue stretch at 2607-2646 (DVDECDGNHRCQHGCQNILGGYRCGCPQGYVQHYQWNQCV) folds into the EGF-like 45; calcium-binding domain. One can recognise an EGF-like 46; calcium-binding domain in the interval 2647 to 2687 (DENECSNPGACGSASCYNTLGSYKCACPSGFSFDQFSSACH). O-linked (Glc) serine glycosylation occurs at Ser-2668. The region spanning 2688–2727 (DVNECSSSKNPCSYGCSNTEGGYLCGCPPGYFRVGQGHCV) is the EGF-like 47; calcium-binding domain. Asn-2803 is a glycosylation site (N-linked (GlcNAc...) asparagine).

It belongs to the fibrillin family. Interacts with BMP2, BMP4, BMP7, BMP10 and GDF5. Interacts with MFAP2 and MFAP5. Interacts with ADAMTSL5. Interacts with MFAP4. N-glycosylated. In terms of processing, O-glycosylated on serine residues by POGLUT2 and POGLUT3. In terms of tissue distribution, widely expressed.

The protein localises to the secreted. It localises to the extracellular space. It is found in the extracellular matrix. Fibrillins are structural components of 10-12 nm extracellular calcium-binding microfibrils, which occur either in association with elastin or in elastin-free bundles. Fibrillin-2-containing microfibrils regulate the early process of elastic fiber assembly. Regulates osteoblast maturation by controlling TGF-beta bioavailability and calibrating TGF-beta and BMP levels, respectively. Functionally, hormone secreted by trophoblasts that promotes trophoblast invasiveness. Has glucogenic activity: is able to increase plasma glucose levels. The polypeptide is Fibrillin-2 (Mus musculus (Mouse)).